The primary structure comprises 261 residues: Pyrroline-5-carboxylate reductase (261 aa).

The protein belongs to the pyrroline-5-carboxylate reductase family.

The protein resides in the cytoplasm. It catalyses the reaction L-proline + NADP(+) = (S)-1-pyrroline-5-carboxylate + NADPH + 2 H(+). The catalysed reaction is L-proline + NAD(+) = (S)-1-pyrroline-5-carboxylate + NADH + 2 H(+). The protein operates within amino-acid biosynthesis; L-proline biosynthesis; L-proline from L-glutamate 5-semialdehyde: step 1/1. Catalyzes the reduction of 1-pyrroline-5-carboxylate (PCA) to L-proline. The sequence is that of Pyrroline-5-carboxylate reductase from Thermus thermophilus (strain ATCC BAA-163 / DSM 7039 / HB27).